The primary structure comprises 124 residues: Protein MGF 110-8L (124 aa).

Positions 1–16 (MKVLILVLLGVVILQA) are cleaved as a signal peptide. An N-linked (GlcNAc...) asparagine; by host glycan is attached at Asn76.

Belongs to the asfivirus MGF 110 family.

In terms of biological role, plays a role in virus cell tropism, and may be required for efficient virus replication in macrophages. This is Protein MGF 110-8L from African swine fever virus (isolate Pig/Kenya/KEN-50/1950) (ASFV).